A 206-amino-acid chain; its full sequence is Uridine kinase (206 aa).

Gly-9 to Thr-16 is a binding site for ATP.

It belongs to the uridine kinase family.

It localises to the cytoplasm. It catalyses the reaction uridine + ATP = UMP + ADP + H(+). The catalysed reaction is cytidine + ATP = CMP + ADP + H(+). Its pathway is pyrimidine metabolism; CTP biosynthesis via salvage pathway; CTP from cytidine: step 1/3. The protein operates within pyrimidine metabolism; UMP biosynthesis via salvage pathway; UMP from uridine: step 1/1. This is Uridine kinase from Borrelia turicatae (strain 91E135).